Here is a 275-residue protein sequence, read N- to C-terminus: NAD(P)H dehydrogenase [quinone] 1 (275 aa).

FAD-binding positions include His13, 19 to 20 (FN), and Gln68. Ser83 is modified (phosphoserine). FAD is bound at residue 105 to 108 (LQWF). 127 to 129 (AYT) provides a ligand contact to substrate. Residues 149–152 (TTGG), Tyr157, and Arg202 contribute to the FAD site. Residues 226–275 (PSSLFDLNFQAGFLLKKEIEDEQKNNKYGLSVGHHLGKPIPTDNQIKARK) are important for apoenzyme conformational stability. Lys252 is covalently cross-linked (Glycyl lysine isopeptide (Lys-Gly) (interchain with G-Cter in SUMO2)).

The protein belongs to the NAD(P)H dehydrogenase (quinone) family. Homodimer. Interacts with PDLIM4 isoform 2; this interaction stabilizes PDLIM4 isoform 2 in response to oxidative stress and protects it from ubiquitin-independent degradation by the core 20S proteasome. Interacts with TP73 (via SAM domain); this interaction is NADH-dependent, stabilizes TP73 in response to oxidative stress and protects it from ubiquitin-independent degradation by the 20S proteasome. Interacts with TP53; this interaction is NADH-dependent, stabilizes TP53 in response to oxidative stress and protects it from ubiquitin-independent degradation by the 20S proteasome. It depends on FAD as a cofactor.

The protein localises to the cytoplasm. It is found in the cytosol. The enzyme catalyses a quinone + NADH + H(+) = a quinol + NAD(+). It catalyses the reaction a quinone + NADPH + H(+) = a quinol + NADP(+). The catalysed reaction is ubiquinone-10 + NADH + H(+) = ubiquinol-10 + NAD(+). It carries out the reaction menadione + NADH + H(+) = menadiol + NAD(+). Functionally, flavin-containing quinone reductase that catalyzes two-electron reduction of quinones to hydroquinones using either NADH or NADPH as electron donors. In a ping-pong kinetic mechanism, the electrons are sequentially transferred from NAD(P)H to flavin cofactor and then from reduced flavin to the quinone, bypassing the formation of semiquinone and reactive oxygen species. Regulates cellular redox state primarily through quinone detoxification. Reduces components of plasma membrane redox system such as coenzyme Q and vitamin quinones, producing antioxidant hydroquinone forms. In the process may function as superoxide scavenger to prevent hydroquinone oxidation and facilitate excretion. Alternatively, can activate quinones and their derivatives by generating redox reactive hydroquinones with DNA cross-linking antitumor potential. Acts as a gatekeeper of the core 20S proteasome known to degrade proteins with unstructured regions. Upon oxidative stress, interacts with tumor suppressors TP53 and TP73 in a NADH-dependent way and inhibits their ubiquitin-independent degradation by the 20S proteasome. This Cavia porcellus (Guinea pig) protein is NAD(P)H dehydrogenase [quinone] 1 (NQO1).